The following is a 352-amino-acid chain: Protein Wnt-3a (352 aa).

The N-terminal stretch at 1–18 (MGCFGYLLLIIGLHQVLA) is a signal peptide. 9 disulfide bridges follow: Cys77–Cys88, Cys128–Cys136, Cys138–Cys155, Cys203–Cys217, Cys205–Cys212, Cys297–Cys312, Cys327–Cys342, Cys329–Cys339, and Cys334–Cys335. N-linked (GlcNAc...) asparagine glycosylation occurs at Asn87. A lipid anchor (O-palmitoleoyl serine) is attached at Ser209. Asn298 carries an N-linked (GlcNAc...) asparagine glycan.

This sequence belongs to the Wnt family. Disulfide bonds have critical and distinct roles in secretion and activity. Loss of each conserved cysteine results in high molecular weight oxidized Wnt oligomers, which are formed through inter-Wnt disulfide bonding. Post-translationally, palmitoleoylation is required for efficient binding to frizzled receptors. Depalmitoleoylation leads to Wnt signaling pathway inhibition. At neurula in anterior neural fold; at tailbud in dorsal midline of midbrain.

It localises to the secreted. Its subcellular location is the extracellular space. The protein resides in the extracellular matrix. Its function is as follows. Ligand for members of the frizzled family of seven transmembrane receptors. Functions in the canonical Wnt signaling pathway that results in activation of transcription factors of the TCF/LEF family. Required for normal embryonic mesoderm development and formation of caudal somites. Required for normal morphogenesis of the developing neural tube. The sequence is that of Protein Wnt-3a (wnt3a) from Xenopus laevis (African clawed frog).